Here is a 247-residue protein sequence, read N- to C-terminus: Large ribosomal subunit protein uL30 (247 aa).

This sequence belongs to the universal ribosomal protein uL30 family.

In Sus scrofa (Pig), this protein is Large ribosomal subunit protein uL30 (RPL7L1).